The primary structure comprises 420 residues: UDP-N-acetylglucosamine 1-carboxyvinyltransferase (420 aa).

22–23 is a binding site for phosphoenolpyruvate; that stretch reads KN. Position 93 (Arg93) interacts with UDP-N-acetyl-alpha-D-glucosamine. The active-site Proton donor is the Cys117. Position 117 is a 2-(S-cysteinyl)pyruvic acid O-phosphothioketal (Cys117). Residues 122-126, Asp307, and Val329 contribute to the UDP-N-acetyl-alpha-D-glucosamine site; that span reads RPVDL.

This sequence belongs to the EPSP synthase family. MurA subfamily.

The protein resides in the cytoplasm. The catalysed reaction is phosphoenolpyruvate + UDP-N-acetyl-alpha-D-glucosamine = UDP-N-acetyl-3-O-(1-carboxyvinyl)-alpha-D-glucosamine + phosphate. It functions in the pathway cell wall biogenesis; peptidoglycan biosynthesis. In terms of biological role, cell wall formation. Adds enolpyruvyl to UDP-N-acetylglucosamine. The protein is UDP-N-acetylglucosamine 1-carboxyvinyltransferase of Hahella chejuensis (strain KCTC 2396).